Here is a 402-residue protein sequence, read N- to C-terminus: Nicotinate phosphoribosyltransferase (402 aa).

The residue at position 224 (histidine 224) is a Phosphohistidine; by autocatalysis.

The protein belongs to the NAPRTase family. In terms of processing, transiently phosphorylated on a His residue during the reaction cycle. Phosphorylation strongly increases the affinity for substrates and increases the rate of nicotinate D-ribonucleotide production. Dephosphorylation regenerates the low-affinity form of the enzyme, leading to product release.

It catalyses the reaction nicotinate + 5-phospho-alpha-D-ribose 1-diphosphate + ATP + H2O = nicotinate beta-D-ribonucleotide + ADP + phosphate + diphosphate. Its pathway is cofactor biosynthesis; NAD(+) biosynthesis; nicotinate D-ribonucleotide from nicotinate: step 1/1. Functionally, catalyzes the synthesis of beta-nicotinate D-ribonucleotide from nicotinate and 5-phospho-D-ribose 1-phosphate at the expense of ATP. This Neisseria gonorrhoeae (strain ATCC 700825 / FA 1090) protein is Nicotinate phosphoribosyltransferase.